Here is a 149-residue protein sequence, read N- to C-terminus: FKBP-type 16 kDa peptidyl-prolyl cis-trans isomerase (149 aa).

Residues 2–72 (SESVQSNSAV…FSLEPDAAFG (71 aa)) enclose the PPIase FKBP-type domain.

The protein belongs to the FKBP-type PPIase family.

The enzyme catalyses [protein]-peptidylproline (omega=180) = [protein]-peptidylproline (omega=0). Its function is as follows. PPIases accelerate the folding of proteins. Substrate specificity carried out with 'Suc-Ala-Xaa-Pro-Phe-4-nitroanilide', where Xaa is the amino acid tested, was found to be Phe &gt; Leu &gt;&gt; Ile &gt; Lys = Ala &gt; Trp &gt; His &gt;&gt; Gln. This Escherichia coli O6:H1 (strain CFT073 / ATCC 700928 / UPEC) protein is FKBP-type 16 kDa peptidyl-prolyl cis-trans isomerase (fkpB).